A 183-amino-acid polypeptide reads, in one-letter code: Deoxyuridine 5'-triphosphate nucleotidohydrolase (183 aa).

Substrate-binding positions include 67 to 69 (RSG), asparagine 80, 84 to 86 (TID), and lysine 94. A disordered region spans residues 138 to 183 (RAEGGFGSTGGHAGLDPASGTSGQVAEGGPTGGNRYASVVSDREGQ). Residues 141-150 (GGFGSTGGHA) are compositionally biased toward gly residues.

It belongs to the dUTPase family. Requires Mg(2+) as cofactor.

The catalysed reaction is dUTP + H2O = dUMP + diphosphate + H(+). The protein operates within pyrimidine metabolism; dUMP biosynthesis; dUMP from dCTP (dUTP route): step 2/2. This enzyme is involved in nucleotide metabolism: it produces dUMP, the immediate precursor of thymidine nucleotides and it decreases the intracellular concentration of dUTP so that uracil cannot be incorporated into DNA. The protein is Deoxyuridine 5'-triphosphate nucleotidohydrolase of Streptomyces coelicolor (strain ATCC BAA-471 / A3(2) / M145).